A 141-amino-acid polypeptide reads, in one-letter code: MLTEDEKQLIQHVWEKVLGHQEDFGAEALERMFTVYPSTKTYFPHFDLHHDSEQIRHHGKKVVSALGDAVRHMDNLSATLSELSNLHAYNLRVDPVNFKLLSHCFQVVLGAHLGREYTPQVQVAYDKFLAAVSAVLAEKYR.

Residues 1–141 (MLTEDEKQLI…VSAVLAEKYR (141 aa)) enclose the Globin domain. Heme b is bound by residues His-58 and His-87.

The protein belongs to the globin family. Heterotetramer of two alpha-D chains and two beta chains. In terms of tissue distribution, red blood cells.

Its function is as follows. Involved in oxygen transport from the lung to the various peripheral tissues. This chain is Hemoglobin subunit alpha-D (HBAD), found in Chelonoidis carbonarius (Red-footed tortoise).